The primary structure comprises 120 residues: Large ribosomal subunit protein uL18 (120 aa).

The protein belongs to the universal ribosomal protein uL18 family. In terms of assembly, part of the 50S ribosomal subunit; part of the 5S rRNA/L5/L18/L25 subcomplex. Contacts the 5S and 23S rRNAs.

In terms of biological role, this is one of the proteins that bind and probably mediate the attachment of the 5S RNA into the large ribosomal subunit, where it forms part of the central protuberance. In Bartonella henselae (strain ATCC 49882 / DSM 28221 / CCUG 30454 / Houston 1) (Rochalimaea henselae), this protein is Large ribosomal subunit protein uL18.